Reading from the N-terminus, the 252-residue chain is 3-deoxy-manno-octulosonate cytidylyltransferase (252 aa).

This sequence belongs to the KdsB family.

The protein localises to the cytoplasm. The enzyme catalyses 3-deoxy-alpha-D-manno-oct-2-ulosonate + CTP = CMP-3-deoxy-beta-D-manno-octulosonate + diphosphate. The protein operates within nucleotide-sugar biosynthesis; CMP-3-deoxy-D-manno-octulosonate biosynthesis; CMP-3-deoxy-D-manno-octulosonate from 3-deoxy-D-manno-octulosonate and CTP: step 1/1. It functions in the pathway bacterial outer membrane biogenesis; lipopolysaccharide biosynthesis. Its function is as follows. Activates KDO (a required 8-carbon sugar) for incorporation into bacterial lipopolysaccharide in Gram-negative bacteria. This is 3-deoxy-manno-octulosonate cytidylyltransferase from Solibacter usitatus (strain Ellin6076).